The primary structure comprises 409 residues: Protein PHOSPHATE STARVATION RESPONSE 1 (409 aa).

Residues methionine 1–threonine 15 are compositionally biased toward basic and acidic residues. 3 disordered regions span residues methionine 1 to leucine 42, glutamate 86 to serine 108, and glutamate 178 to alanine 226. Polar residues-rich tracts occupy residues arginine 16 to proline 26 and histidine 90 to serine 108. Residues glutamine 192–glycine 224 are compositionally biased toward low complexity. The region spanning glycine 222 to tyrosine 282 is the HTH myb-type domain. The segment at residues proline 253–arginine 278 is a DNA-binding region (H-T-H motif). A coiled-coil region spans residues threonine 314–glutamine 334. The LHEQLE signature appears at leucine 327 to glutamate 332. Polar residues predominate over residues glycine 358 to alanine 370. Residues glycine 358–asparagine 409 are disordered. Positions alanine 371 to glutamate 396 are enriched in basic and acidic residues. Serine 399 carries the phosphoserine modification.

This sequence belongs to the MYB-CC family. As to quaternary structure, homodimers and heterodimers. Interacts with SPX1 in a Pi-dependent manner. Does not interact with PHL2 or PHL3. In terms of processing, sumoylated by SIZ1. Sumoylation controls phosphate deficiency responses.

The protein resides in the nucleus. Its function is as follows. Transcription factor involved in phosphate starvation signaling. Binds as a dimer to P1BS, an imperfect palindromic sequence 5'-GNATATNC-3', to promote the expression of inorganic phosphate (Pi) starvation-responsive genes. SPX1 is a competitive inhibitor of this DNA-binding. PHR1 binding to its targets is low Pi-dependent. Regulates the expression of miR399. Regulates the expression of IPS1 (At3g09922), a non-coding RNA that mimics the target of miR399 to block the cleavage of PHO2 under Pi-deficient conditions. Regulates lipid remodeling and triacylglycerol accumulation during phosphorus starvation. Required for the shoot-specific hypoxic response. Regulates FER1 expression upon phosphate starvation, linking iron and phosphate homeostasis. Contributes to the homeostasis of both sulfate and phosphate in plants under phosphate deficiency. Required for adaptation to high light and retaining functional photosynthesis during phosphate starvation. Involved in the coregulation of Zn and Pi homeostasis. In Arabidopsis thaliana (Mouse-ear cress), this protein is Protein PHOSPHATE STARVATION RESPONSE 1.